We begin with the raw amino-acid sequence, 349 residues long: Heparin sulfate O-sulfotransferase (349 aa).

Over Met-1 to Trp-17 the chain is Cytoplasmic. A helical; Signal-anchor for type II membrane protein membrane pass occupies residues Leu-18–Ile-38. Topologically, residues Arg-39 to Lys-349 are lumenal. N-linked (GlcNAc...) asparagine glycans are attached at residues Asn-107 and Asn-126. Active-site residues include His-139 and His-141. Disulfide bonds link Cys-200–Cys-208 and Cys-221–Cys-227. N-linked (GlcNAc...) asparagine glycosylation is present at Asn-282.

This sequence belongs to the sulfotransferase 3 family. As to quaternary structure, homotrimer.

It localises to the golgi apparatus membrane. Its function is as follows. Catalyzes the transfer of sulfate to the C2-position of selected hexuronic acid residues within the maturing heparan sulfate (HS). The protein is Heparin sulfate O-sulfotransferase of Drosophila melanogaster (Fruit fly).